Consider the following 500-residue polypeptide: NADH-quinone oxidoreductase subunit N (500 aa).

14 helical membrane-spanning segments follow: residues 6 to 26 (SWIA…IALV), 40 to 60 (ALTL…ALGG), 69 to 89 (MVVV…ALMI), 106 to 125 (GGEF…VMIS), 129 to 151 (FLVL…ALRR), 164 to 184 (FVLG…LYGA), 207 to 227 (LVFG…AVPF), 239 to 259 (PTAV…AMTI), 276 to 296 (MLAL…VAQT), 302 to 322 (LAFS…AGVV), 337 to 357 (MFYA…ILLL), 380 to 400 (YAGV…LVGF), 417 to 437 (SYLV…FYYL), and 464 to 484 (IVLA…SSLM).

This sequence belongs to the complex I subunit 2 family. NDH-1 is composed of 14 different subunits. Subunits NuoA, H, J, K, L, M, N constitute the membrane sector of the complex.

Its subcellular location is the cell inner membrane. The enzyme catalyses a quinone + NADH + 5 H(+)(in) = a quinol + NAD(+) + 4 H(+)(out). NDH-1 shuttles electrons from NADH, via FMN and iron-sulfur (Fe-S) centers, to quinones in the respiratory chain. The immediate electron acceptor for the enzyme in this species is believed to be ubiquinone. Couples the redox reaction to proton translocation (for every two electrons transferred, four hydrogen ions are translocated across the cytoplasmic membrane), and thus conserves the redox energy in a proton gradient. The polypeptide is NADH-quinone oxidoreductase subunit N (Polaromonas naphthalenivorans (strain CJ2)).